We begin with the raw amino-acid sequence, 603 residues long: MKSGKQSSQPEKGTSRILSLTVLFIAFCGFSFYLGGIFCSERDKIVAKDVTRTTTKAVASPKEPTATPIQIKSVSFPECGSEFQDYTPCTDPKRWKKYGVHRLSFLERHCPPVYEKNECLIPPPDGYKPPIRWPKSREQCWYRNVPYDWINKQKSNQHWLKKEGDKFHFPGGGTMFPRGVSHYVDLMQDLIPEMKDGTVRTAIDTGCGVASWGGDLLDRGILSLSLAPRDNHEAQVQFALERGIPAILGIISTQRLPFPSNAFDMAHCSRCLIPWTEFGGIYLLEIHRIVRPGGFWVLSGPPVNYNRRWRGWNTTMEDQKSDYNKLQSLLTSMCFKKYAQKDDIAVWQKLSDKSCYDKIAKNMEAYPPKCDDSIEPDSAWYTPLRPCVVAPTPKVKKSGLGSIPKWPERLHVAPERIGDVHGGSANSLKHDDGKWKNRVKHYKKVLPALGTDKIRNVMDMNTVYGGFSAALIEDPIWVMNVVSSYSANSLPVVFDRGLIGTYHDWCEAFSTYPRTYDLLHLDSLFTLESHRCEMKYILLEMDRILRPSGYVIIRESSYFMDAITTLAKGIRWSCRREETEYAVKSEKILVCQKKLWFSSNQTS.

Residues 1-16 are Cytoplasmic-facing; that stretch reads MKSGKQSSQPEKGTSR. A helical; Signal-anchor for type II membrane protein transmembrane segment spans residues 17–37; sequence ILSLTVLFIAFCGFSFYLGGI. At 38–603 the chain is on the lumenal side; sequence FCSERDKIVA…KLWFSSNQTS (566 aa). 2 N-linked (GlcNAc...) asparagine glycosylation sites follow: asparagine 313 and asparagine 600.

It belongs to the methyltransferase superfamily.

The protein localises to the golgi apparatus membrane. In Arabidopsis thaliana (Mouse-ear cress), this protein is Probable methyltransferase PMT20.